Here is a 30-residue protein sequence, read N- to C-terminus: Tail tubular protein A (30 aa).

The polypeptide is Tail tubular protein A (11) (Escherichia coli (Bacteriophage T3)).